The following is a 3966-amino-acid chain: Histone-lysine N-methyltransferase 2A (3966 aa).

Disordered stretches follow at residues 1-106 and 130-231; these read MAHS…LLRV and VFGE…GVKI. The Menin-binding motif (MBM) motif lies at 6-25; that stretch reads RWRFPARPGTTGGGGGGGRR. A compositionally biased stretch (gly residues) spans 15–29; it reads TTGGGGGGGRRGLGG. The span at 75-102 shows a compositional bias: low complexity; it reads GAAAASAASSSSASSSSSSSSSASSGPA. The Integrase domain-binding motif 1 (IBM1) signature appears at 121 to 132; it reads GTNLRRFRAVFG. A phosphoserine; by CK2 mark is found at Ser134 and Ser140. Positions 145-150 match the Integrase domain-binding motif 2 (IBM2) motif; that stretch reads QFLGFG. Phosphoserine is present on Ser151. The segment at residues 167 to 178 is a DNA-binding region (a.T hook 1); the sequence is KASPRKPRGRPR. A Phosphoserine modification is found at Ser195. Positions 200–218 are enriched in basic and acidic residues; that stretch reads SETKSADKIKKKDSKSIEK. The a.T hook 2 DNA-binding region spans 215–225; sequence SIEKKRGRPPT. Position 237 is an N6-acetyllysine (Lys237). The segment at residues 299–307 is a DNA-binding region (a.T hook 3); it reads RRRGRPPST. A disordered region spans residues 322-343; that stretch reads LEKPQKVRKDKEGTPPLTKEDK. Residue Lys371 is modified to N6-acetyllysine. Positions 440 to 590 are disordered; sequence RLESTPNSRF…PWLMPPTIPL (151 aa). Over residues 450-489 the composition is skewed to low complexity; it reads SATSCGSSEKSSAASQHSSQMSSDSSRSSSPSIDTTSDSQ. Phosphoserine is present on Ser516. The segment covering 544-557 has biased composition (low complexity); sequence LPTLQSAPQQQTSS. Pro residues predominate over residues 558–571; sequence SPPPPLLTPPPPLQ. At Lys634 the chain carries N6-acetyllysine. Position 678 is a phosphoserine (Ser678). Disordered stretches follow at residues 711–943, 963–1003, 1034–1064, and 1101–1161; these read ESVT…ADVA, RGNL…TSSI, IEKS…RGPR, and ILSS…CQVP. Low complexity-rich tracts occupy residues 717–730 and 760–790; these read SNRT…SGVS and LSTS…ASAL. 2 stretches are compositionally biased toward polar residues: residues 791-806 and 817-830; these read NPTF…QSGE and QTSA…SNSP. Residue Thr837 is modified to Phosphothreonine. Over residues 843–887 the composition is skewed to basic and acidic residues; it reads EKGRKKDTAPEELSKDRDADKSVEKDKSRERDREREKENKRESRK. Ser923 carries the phosphoserine modification. The segment covering 989–1003 has biased composition (low complexity); the sequence is SAPSSSTVKHSTSSI. The segment covering 1040–1059 has biased composition (polar residues); it reads LKQTDQPKAQGQESDSSETS. Ser1053 is modified (phosphoserine). Basic and acidic residues predominate over residues 1101-1111; sequence ILSSMGNDDKS. Residue Lys1127 is modified to N6-acetyllysine. The segment at 1144–1192 adopts a CXXC-type zinc-finger fold; sequence KKGRRSRRCGQCPGCQVPEDCGICTNCLDKPKFGGRNIKKQCCKMRKCQ. Zn(2+) contacts are provided by Cys1152, Cys1155, Cys1158, Cys1164, Cys1167, Cys1170, Cys1186, and Cys1191. The tract at residues 1196-1390 is disordered; the sequence is WMPSKASLQK…PLSNGISSKQ (195 aa). Positions 1217-1229 are enriched in basic and acidic residues; sequence SKTTEKKESKEST. Residues 1230–1241 are compositionally biased toward low complexity; it reads AVKSPLEPAQKA. At Lys1232 the chain carries N6-acetyllysine. A compositionally biased stretch (basic and acidic residues) spans 1245–1270; sequence PREEPAPKKSSSEPPPRKPVEEKSEE. Residues 1369 to 1390 are compositionally biased toward polar residues; sequence KQENAGTLNILNPLSNGISSKQ. 3 PHD-type zinc fingers span residues 1430–1481, 1478–1532, and 1565–1629; these read RVVC…CKFC, CKFC…CVRC, and GNFC…CTER. The segment at 1583 to 1599 is interaction with histone H3K4me3; that stretch reads KMMQCGKCDRWVHSKCE. Positions 1637-1767 constitute a Bromo domain; the sequence is ALEKELQASL…SFFIRQMERV (131 aa). 2 disordered regions span residues 1665–1714 and 1807–1870; these read YRQA…EGVK and WQER…PGID. Over residues 1828-1849 the composition is skewed to pro residues; the sequence is APKPKGPGEPDSPTPLHPPTPP. Ser1839 carries the phosphoserine modification. At Thr1847 the chain carries Phosphothreonine. The residue at position 1860 (Ser1860) is a Phosphoserine. Residues 1872 to 1912 form a C2HC pre-PHD-type zinc finger; the sequence is NRQCALCLMYGDDSANDAGRLLYIGQNEWTHVNCALWSAEV. The segment at 1933–1980 adopts a PHD-type 4 zinc-finger fold; the sequence is LRCEFCQKPGATVGCCLTSCTSNYHFMCSRAKNCVFLDDKKVYCQRHR. Residues 2020–2076 enclose the FYR N-terminal domain; it reads NIHMMIGSMTIDCLGILNDLSDCEDKLFPIGYQCSRVYWSTTDARKRCVYTCKIMEC. Residue Ser2100 is modified to Phosphoserine. Positions 2147–2174 are disordered; that stretch reads RTPSYSPTQRSPGCRPLPSAGSPTPTTH. Thr2148 is subject to Phosphothreonine. Residues Ser2152 and Ser2202 each carry the phosphoserine modification. 4 disordered regions span residues 2214–2339, 2371–2619, 2639–2673, and 2709–2759; these read VRTG…ATPG, RGQR…SARA, EDIP…SDED, and KISQ…DAGE. A compositionally biased stretch (low complexity) spans 2218–2230; the sequence is SAYSRSSVSSVPS. Composition is skewed to polar residues over residues 2250–2284 and 2308–2320; these read LSSS…SSPS and TSSS…SAHS. Composition is skewed to basic and acidic residues over residues 2411–2422 and 2430–2440; these read ILHEHIGSSSRD and SSKETCKEKHS. The segment covering 2498–2509 has biased composition (polar residues); that stretch reads GQSTQVEGSSKE. Residue Lys2524 forms a Glycyl lysine isopeptide (Lys-Gly) (interchain with G-Cter in SUMO2) linkage. A compositionally biased stretch (polar residues) spans 2528 to 2537; the sequence is ENQSKNTQKE. The residue at position 2560 (Ser2560) is a Phosphoserine. The segment covering 2569-2588 has biased composition (polar residues); the sequence is PSPNNTLSQDPQSNNYQNLP. Position 2607 is a phosphoserine (Ser2607). Basic residues predominate over residues 2609–2618; sequence KRRYPRRSAR. Over residues 2663–2673 the composition is skewed to acidic residues; it reads GADDLSTSDED. The span at 2722–2737 shows a compositional bias: polar residues; that stretch reads SDTSVTATSRKSSQIP. Over residues 2740–2759 the composition is skewed to basic and acidic residues; it reads NGKENGTENLKIDRPEDAGE. Phosphoserine is present on Ser2792. The short motif at 2843-2851 is the 9aaTAD element; that stretch reads SDIMDFVLK. Residue Ser2951 is modified to Phosphoserine. Residue Lys2954 is modified to N6-acetyllysine. 2 disordered regions span residues 2958 to 3060 and 3164 to 3239; these read ITEK…NAAV and AAQS…PSNI. The segment covering 3012–3025 has biased composition (polar residues); that stretch reads HGNSQDLTRNSGTP. Ser3032 is subject to Phosphoserine. Residues 3035 to 3060 are compositionally biased toward polar residues; it reads VPVQNQKYVPSSTDSPGPSQISNAAV. Residues 3167 to 3178 are compositionally biased toward low complexity; it reads SSFPPNISSPPS. Positions 3196 to 3212 are enriched in polar residues; sequence EANQRTDLTTTVATPSS. The span at 3214–3229 shows a compositional bias: basic residues; sequence LKKRPISRLHTRKNKK. Thr3369 is subject to Phosphothreonine. The residue at position 3459 (Lys3459) is an N6-acetyllysine. The disordered stretch occupies residues 3462–3640; the sequence is TLTSQRDRDP…AMEEEESGFS (179 aa). The span at 3475–3487 shows a compositional bias: polar residues; the sequence is PGTQPSNFTQTAE. Over residues 3501–3528 the composition is skewed to low complexity; sequence PSAKPASSASPGSSPSSGQQSGSSSVPG. 2 positions are modified to phosphoserine: Ser3510 and Ser3523. The segment covering 3558–3570 has biased composition (basic and acidic residues); sequence TSSEAHIPHRDTD. Positions 3663-3744 constitute an FYR C-terminal domain; it reads KKGLVFEISS…KHCRNYKFRF (82 aa). The short motif at 3759 to 3764 is the WDR5 interaction motif (WIN) element; that stretch reads GSARAE. The disordered stretch occupies residues 3782–3805; sequence HRQPPEYNPNDEEEEEVQLKSARR. In terms of domain architecture, SET spans 3826 to 3942; that stretch reads EAVGVYRSPI…RGEELTYDYK (117 aa). 2 residues coordinate S-adenosyl-L-methionine: His3836 and Arg3838. Cys3879 carries the post-translational modification S-methylcysteine; by autocatalysis. Residues Tyr3880 and 3903 to 3904 contribute to the S-adenosyl-L-methionine site; that span reads NH. 2 residues coordinate Zn(2+): Cys3906 and Cys3954. A Post-SET domain is found at 3950–3966; it reads NKLPCNCGAKKCRKFLN. Asn3955 contributes to the S-adenosyl-L-methionine binding site. Zn(2+)-binding residues include Cys3956 and Cys3961.

This sequence belongs to the class V-like SAM-binding methyltransferase superfamily. Histone-lysine methyltransferase family. TRX/MLL subfamily. MLL cleavage product N320 heterodimerizes with MLL cleavage product C180 (via SET and FYRC domains). Component of some MLL1/MLL complex, at least composed of the core components KMT2A/MLL1, ASH2L, HCFC1/HCF1, HCFC2, WDR5, DPY30 and RBBP5, as well as the facultative components BACC1, CHD8, E2F6, HSP70, INO80C, KANSL1, LAS1L, MAX, MCRS1, MEN1, MGA, KAT8/MOF, PELP1, PHF20, PRP31, RING2, RUVB1/TIP49A, RUVB2/TIP49B, SENP3, TAF1, TAF4, TAF6, TAF7, TAF9 and TEX10. Interacts (via WIN motif) with WDR5; the interaction is direct. Interaction with WDR5 is required for stable interaction with ASH2L and RBBP5, and thereby also for optimal histone methyltransferase activity. Interacts with KAT8/MOF; the interaction is direct. Interacts with SBF1 and PPP1R15A. Interacts with ZNF335. Interacts with CLOCK and BMAL1 in a circadian manner. Interacts with PPIE; this results in decreased histone H3 methyltransferase activity. Interacts with CREBBP. Interacts with the WRAD complex composed of WDR5, RBBP5, ASH2L and DPY30. Interacts (via MBM motif) with MEN1. Interacts (via IBM motifs) with PSIP1 (via IBD domain) with moderate affinity whereas the KMT2A-MEN1 complex interacts with a greater affinity; MEN1 enhances interaction of KMT2A with PSIP1. Phosphorylation increases its affinity for PSIP1. Forms a complex with CREBBP and CREB1. Proteolytic cleavage by TASP1 generates MLL cleavage 3product N320 and MLL cleavage product C180, which reassemble through a non-covalent association. 2 cleavage sites exist, cleavage site 1 (CS1) and cleavage site 2 (CS2), to generate MLL cleavage products N320 and C180. CS2 is the major site. Post-translationally, phosphorylation increases its interaction with PSIP1. In terms of processing, auto-methylated at Cys-3879: auto-methylation is inhibited by the WRAD complex and unmodified histone H3.

It is found in the nucleus. The enzyme catalyses L-lysyl(4)-[histone H3] + S-adenosyl-L-methionine = N(6)-methyl-L-lysyl(4)-[histone H3] + S-adenosyl-L-homocysteine + H(+). The catalysed reaction is N(6)-methyl-L-lysyl(4)-[histone H3] + S-adenosyl-L-methionine = N(6),N(6)-dimethyl-L-lysyl(4)-[histone H3] + S-adenosyl-L-homocysteine + H(+). It carries out the reaction L-cysteinyl-[protein] + S-adenosyl-L-methionine = S-methyl-L-cysteinyl-[protein] + S-adenosyl-L-homocysteine + H(+). Its function is as follows. Histone methyltransferase that plays an essential role in early development and hematopoiesis. Catalytic subunit of the MLL1/MLL complex, a multiprotein complex that mediates both methylation of 'Lys-4' of histone H3 (H3K4me) complex and acetylation of 'Lys-16' of histone H4 (H4K16ac). Catalyzes methyl group transfer from S-adenosyl-L-methionine to the epsilon-amino group of 'Lys-4' of histone H3 (H3K4) via a non-processive mechanism. Part of chromatin remodeling machinery predominantly forms H3K4me1 and H3K4me2 methylation marks at active chromatin sites where transcription and DNA repair take place. Has weak methyltransferase activity by itself, and requires other component of the MLL1/MLL complex to obtain full methyltransferase activity. Has no activity toward histone H3 phosphorylated on 'Thr-3', less activity toward H3 dimethylated on 'Arg-8' or 'Lys-9', while it has higher activity toward H3 acetylated on 'Lys-9'. Binds to unmethylated CpG elements in the promoter of target genes and helps maintain them in the nonmethylated state. Required for transcriptional activation of HOXA9. Promotes PPP1R15A-induced apoptosis. Plays a critical role in the control of circadian gene expression and is essential for the transcriptional activation mediated by the CLOCK-BMAL1 heterodimer. Establishes a permissive chromatin state for circadian transcription by mediating a rhythmic methylation of 'Lys-4' of histone H3 (H3K4me) and this histone modification directs the circadian acetylation at H3K9 and H3K14 allowing the recruitment of CLOCK-BMAL1 to chromatin. Also has auto-methylation activity on Cys-3879 in absence of histone H3 substrate. This is Histone-lysine N-methyltransferase 2A (Kmt2a) from Mus musculus (Mouse).